The following is a 388-amino-acid chain: Type II secretion system protein F (388 aa).

A disordered region spans residues 1 to 28; that stretch reads MTEGDSARQVRQQLREQGLTPLEVNETT. Over 1 to 153 the chain is Cytoplasmic; sequence MTEGDSARQV…HMRTKLLQAM (153 aa). Ca(2+) contacts are provided by Glu79, Asn133, and Asp137. Residues 154–174 form a helical membrane-spanning segment; the sequence is IYPIVLTLVAVGVISILLTAV. Topologically, residues 175–205 are periplasmic; that stretch reads VPKVVAQFEHMGQQLPATTRFLIGTSELMQH. Residues 206 to 226 traverse the membrane as a helical segment; that stretch reads YGLWFLLLLFIGGFVWRWWLT. The Cytoplasmic portion of the chain corresponds to 227–350; the sequence is DEKRRRHWHQ…QDREFETQVN (124 aa). Residues 351 to 371 traverse the membrane as a helical segment; the sequence is IALGVFEPLLVVSMAGVVLFI. Over 372-388 the chain is Periplasmic; the sequence is VMSILQPILELNNMVNL.

Belongs to the GSP F family. As to quaternary structure, type II secretion system is composed of four main components: the outer membrane complex, the inner membrane complex, the cytoplasmic secretion ATPase and the periplasm-spanning pseudopilus. Homodimer. Interacts with ExeE and ExeL components.

Its subcellular location is the cell inner membrane. In terms of biological role, component of the type II secretion system inner membrane complex required for the energy-dependent secretion of extracellular factors such as proteases and toxins from the periplasm. This Aeromonas hydrophila protein is Type II secretion system protein F (exeF).